A 107-amino-acid polypeptide reads, in one-letter code: Nucleoid-associated protein Oant_0022 (107 aa).

This sequence belongs to the YbaB/EbfC family. In terms of assembly, homodimer.

The protein resides in the cytoplasm. It localises to the nucleoid. Its function is as follows. Binds to DNA and alters its conformation. May be involved in regulation of gene expression, nucleoid organization and DNA protection. The sequence is that of Nucleoid-associated protein Oant_0022 from Brucella anthropi (strain ATCC 49188 / DSM 6882 / CCUG 24695 / JCM 21032 / LMG 3331 / NBRC 15819 / NCTC 12168 / Alc 37) (Ochrobactrum anthropi).